A 440-amino-acid polypeptide reads, in one-letter code: GTPase Der (440 aa).

EngA-type G domains are found at residues 5-167 (ATVA…PEQE) and 178-353 (IMLS…KEHS). GTP contacts are provided by residues 11-18 (GRPNVGKS), 58-62 (DTGGI), 120-123 (NKSE), 184-191 (GRPNVGKS), 231-235 (DTAGL), and 296-299 (NKWD). Residues 354–438 (KRITTADVNR…PIRILERVKQ (85 aa)) enclose the KH-like domain.

The protein belongs to the TRAFAC class TrmE-Era-EngA-EngB-Septin-like GTPase superfamily. EngA (Der) GTPase family. Associates with the 50S ribosomal subunit.

Its function is as follows. GTPase that plays an essential role in the late steps of ribosome biogenesis. This is GTPase Der from Natranaerobius thermophilus (strain ATCC BAA-1301 / DSM 18059 / JW/NM-WN-LF).